Reading from the N-terminus, the 311-residue chain is Fructose-1,6-bisphosphatase class 1 (311 aa).

The Mg(2+) site is built by Glu90, Asp110, Leu112, and Asp113. Substrate is bound by residues Asp113 to Ser116, Tyr221, and Lys251. Position 257 (Glu257) interacts with Mg(2+).

It belongs to the FBPase class 1 family. In terms of assembly, homotetramer. The cofactor is Mg(2+).

It localises to the cytoplasm. The enzyme catalyses beta-D-fructose 1,6-bisphosphate + H2O = beta-D-fructose 6-phosphate + phosphate. Its pathway is carbohydrate biosynthesis; gluconeogenesis. The polypeptide is Fructose-1,6-bisphosphatase class 1 (Methanospirillum hungatei JF-1 (strain ATCC 27890 / DSM 864 / NBRC 100397 / JF-1)).